The primary structure comprises 356 residues: Vacuolar protein sorting-associated protein 26 (356 aa).

A disordered region spans residues 301-356 (MRRPGTEDDEEEKQTTSIPGTQKFTAPAPVEHPKPESPRSDPKSGSTSPDDNSDSS). Positions 315 to 324 (TTSIPGTQKF) are enriched in polar residues. Positions 331 to 342 (EHPKPESPRSDP) are enriched in basic and acidic residues.

This sequence belongs to the VPS26 family.

In terms of biological role, may play a role in vesicular protein sorting, similar to the yeast retromer proteins. The chain is Vacuolar protein sorting-associated protein 26 (vps-26) from Caenorhabditis elegans.